Here is a 361-residue protein sequence, read N- to C-terminus: Free fatty acid receptor 4 (361 aa).

The disordered stretch occupies residues 1–21 (MSPECAQTTGPGPSRTPDQVN). Over 1–45 (MSPECAQTTGPGPSRTPDQVNRTHFPFFSDVKGDHRLVLSVLETT) the chain is Extracellular. The N-linked (GlcNAc...) asparagine glycan is linked to Asn21. Residues 46–66 (VLGLIFVVSLLGNVCALVLVV) traverse the membrane as a helical segment. Topologically, residues 67–77 (RRRRRGATVSL) are cytoplasmic. Residues 78–98 (VLNLFCADLLFTSAIPLVLVV) form a helical membrane-spanning segment. The Extracellular portion of the chain corresponds to 99-103 (RWTEA). The chain crosses the membrane as a helical span at residues 104-124 (WLLGPVVCHLLFYVMTMSGSV). Cys111 and Cys194 form a disulfide bridge. Topologically, residues 125 to 156 (TILTLAAVSLERMVCIVRLRRGLSGPGRRTQA) are cytoplasmic. Residues 157–177 (ALLAFIWGYSALAALPLCILF) traverse the membrane as a helical segment. Over 178-204 (RVVPQRLPGGDQEIPICTLDWPNRIGE) the chain is Extracellular. Residues 205 to 225 (ISWDVFFVTLNFLVPGLVIVI) traverse the membrane as a helical segment. Residues 226-268 (SYSKILQITKASRKRLTLSLAYSESHQIRVSQQDYRLFRTLFL) lie on the Cytoplasmic side of the membrane. A helical transmembrane segment spans residues 269 to 289 (LMVSFFIMWSPIIITILLILI). Residues 290 to 295 (QNFRQD) are Extracellular-facing. A helical transmembrane segment spans residues 296 to 316 (LVIWPSLFFWVVAFTFANSAL). Residues 317 to 361 (NPILYNMSLFRSEWRKIFCCFFFPEKGAIFTETSIRRNDLSVIST) are Cytoplasmic-facing. A phosphothreonine mark is found at Thr347 and Thr349. A phosphoserine mark is found at Ser350, Ser357, and Ser360.

This sequence belongs to the G-protein coupled receptor 1 family. As to quaternary structure, interacts (via C-terminus) with ARRB2 following LCFAs stimulation. Phosphorylated at two clusters of Ser and Thr residues located in the intracellular C-terminus. Prerequisite for FFAR4 internalization via an ARRB2-dependent pathway.

It is found in the cell membrane. It localises to the endosome membrane. Its subcellular location is the lysosome membrane. The protein resides in the cell projection. The protein localises to the cilium membrane. Functionally, G-protein-coupled receptor for long-chain fatty acids (LCFAs) with a major role in adipogenesis, energy metabolism and inflammation. Signals via G-protein and beta-arrestin pathways. LCFAs sensing initiates activation of phosphoinositidase C-linked G proteins GNAQ and GNA11 (G(q)/G(11)), inducing a variety of cellular responses via second messenger pathways such as intracellular calcium mobilization, modulation of cyclic adenosine monophosphate (cAMP) production, and mitogen-activated protein kinases (MAPKs). After LCFAs binding, associates with beta-arrestin ARRB2 that acts as an adapter protein coupling the receptor to specific downstream signaling pathways, as well as mediating receptor endocytosis. In response to dietary fats, plays an important role in the regulation of adipocyte proliferation and differentiation. Acts as a receptor for omega-3 polyunsaturated fatty acids (PUFAs) at primary cilium of perivascular preadipocytes, initiating an adipogenic program via cAMP and CTCF-dependent chromatin remodeling that ultimately results in transcriptional activation of adipogenic genes and cell cycle entry. Induces differentiation of brown and beige adipocytes probably via autocrine and endocrine functions of FGF21 hormone. Contributes to the thermogenic activation of brown adipose tissue and the browning of white adipose tissue. Activates brown adipocytes by initiating intracellular calcium signaling leading to mitochondrial depolarization and fission, and overall increased mitochondrial respiration. Consequently stimulates fatty acid uptake and oxidation in mitochondria together with UCP1-mediated thermogenic respiration, eventually reducing fat mass. Regulates bi-potential differentiation of bone marrow mesenchymal stem cells toward osteoblasts or adipocytes likely by up-regulating distinct integrins. In response to dietary fats regulates hormone secretion and appetite. Stimulates GIP and GLP1 secretion from enteroendocrine cells as well as GCG secretion in pancreatic alpha cells, thereby playing a role in the regulation of blood glucose levels. Negatively regulates glucose-induced SST secretion in pancreatic delta cells. Mediates LCFAs inhibition of GHRL secretion, an appetite-controlling hormone. In taste buds, contributes to sensing of dietary fatty acids by the gustatory system. During the inflammatory response, promotes anti-inflammatory M2 macrophage differentiation in adipose tissue. Mediates the anti-inflammatory effects of omega-3 PUFAs via inhibition of NLRP3 inflammasome activation. In this pathway, interacts with adapter protein ARRB2 and inhibits the priming step triggered by Toll-like receptors (TLRs) at the level of TAK1 and TAB1. Further inhibits the activation step when ARRB2 directly associates with NLRP3, leading to inhibition of pro-inflammatory cytokine release. Mediates LCFAs anti-apoptotic effects. The polypeptide is Free fatty acid receptor 4 (Ffar4) (Rattus norvegicus (Rat)).